We begin with the raw amino-acid sequence, 429 residues long: Histidinol dehydrogenase (429 aa).

The NAD(+) site is built by tyrosine 130, glutamine 191, and asparagine 214. 3 residues coordinate substrate: serine 237, glutamine 259, and histidine 262. The Zn(2+) site is built by glutamine 259 and histidine 262. Residues glutamate 327 and histidine 328 each act as proton acceptor in the active site. Substrate-binding residues include histidine 328, aspartate 361, glutamate 415, and histidine 420. Residue aspartate 361 participates in Zn(2+) binding. Residue histidine 420 participates in Zn(2+) binding.

The protein belongs to the histidinol dehydrogenase family. The cofactor is Zn(2+).

The enzyme catalyses L-histidinol + 2 NAD(+) + H2O = L-histidine + 2 NADH + 3 H(+). It functions in the pathway amino-acid biosynthesis; L-histidine biosynthesis; L-histidine from 5-phospho-alpha-D-ribose 1-diphosphate: step 9/9. Catalyzes the sequential NAD-dependent oxidations of L-histidinol to L-histidinaldehyde and then to L-histidine. This is Histidinol dehydrogenase from Neisseria meningitidis serogroup B (strain ATCC BAA-335 / MC58).